We begin with the raw amino-acid sequence, 432 residues long: Nuclear pore complex-interacting protein family member B8 (432 aa).

Disordered stretches follow at residues R260–S280 and S353–R420. Polar residues predominate over residues Q270 to S280. Residues E374–E402 are compositionally biased toward basic and acidic residues. Basic residues predominate over residues K408 to R420.

Belongs to the NPIP family.

The sequence is that of Nuclear pore complex-interacting protein family member B8 (NPIPB8) from Homo sapiens (Human).